A 569-amino-acid polypeptide reads, in one-letter code: Putative potassium-transporting ATPase ATP-binding subunit (569 aa).

The next 2 helical transmembrane spans lie at 34–54 and 58–78; these read PVMF…LAMV and IAGS…TVLF. The active-site 4-aspartylphosphate intermediate is Asp-194. ATP is bound by residues Asp-231, Glu-235, 264–271, and Lys-282; that span reads FTAQSRMS. Positions 405 and 409 each coordinate Mg(2+). A run of 3 helical transmembrane segments spans residues 475–495, 503–523, and 543–563; these read FAII…LNVM, AILS…PLAL, and IYGL…DVLL.

Belongs to the cation transport ATPase (P-type) (TC 3.A.3) family. Type IA subfamily. In terms of assembly, the system is composed of three essential subunits: KdpA, KdpB and KdpC.

The protein localises to the cell inner membrane. It carries out the reaction K(+)(out) + ATP + H2O = K(+)(in) + ADP + phosphate + H(+). Part of the high-affinity ATP-driven potassium transport (or Kdp) system, which catalyzes the hydrolysis of ATP coupled with the electrogenic transport of potassium into the cytoplasm. This subunit is responsible for energy coupling to the transport system and for the release of the potassium ions to the cytoplasm. The protein is Putative potassium-transporting ATPase ATP-binding subunit of Salmonella typhi.